The primary structure comprises 118 residues: MASQSQGIQQLLQAEKRAAEKVSEARKRKNRRLKQAKEEAQAEVEQYRLQREKEFKAKEAAALGSHGSCSTEVEKDTQEKMTILQTYFQQNRDEVLDNLLAFVCDIRPEIHENYRING.

Ala-2 is modified (N-acetylalanine). Residues 19–42 (AEKVSEARKRKNRRLKQAKEEAQA) form a disordered region.

Belongs to the V-ATPase G subunit family. As to quaternary structure, V-ATPase is a heteromultimeric enzyme made up of two complexes: the ATP-hydrolytic V1 complex and the proton translocation V0 complex. The V1 complex consists of three catalytic AB heterodimers that form a heterohexamer, three peripheral stalks each consisting of EG heterodimers, one central rotor including subunits D and F, and the regulatory subunits C and H. The proton translocation complex V0 consists of the proton transport subunit a, a ring of proteolipid subunits c9c'', rotary subunit d, subunits e and f, and the accessory subunits ATP6AP1/Ac45 and ATP6AP2/PRR. In terms of tissue distribution, brain, heart, kidney and spleen.

The protein localises to the apical cell membrane. Functionally, subunit of the V1 complex of vacuolar(H+)-ATPase (V-ATPase), a multisubunit enzyme composed of a peripheral complex (V1) that hydrolyzes ATP and a membrane integral complex (V0) that translocates protons. V-ATPase is responsible for acidifying and maintaining the pH of intracellular compartments and in some cell types, is targeted to the plasma membrane, where it is responsible for acidifying the extracellular environment. In aerobic conditions, involved in intracellular iron homeostasis, thus triggering the activity of Fe(2+) prolyl hydroxylase (PHD) enzymes, and leading to HIF1A hydroxylation and subsequent proteasomal degradation. This is V-type proton ATPase subunit G 1 (ATP6V1G1) from Bos taurus (Bovine).